Consider the following 265-residue polypeptide: Oxidoreductase nsrR (265 aa).

Belongs to the avfA family.

It participates in secondary metabolite biosynthesis. Its function is as follows. Oxidoreductase; part of the gene cluster that mediates the biosynthesis of the tetrahydroxanthone dimer neosartorin, which exhibits antibacterial activity. The two different monomeric units appear to be synthesized by the same set of enzymes, among which the Baeyer-Villiger monooxygenase nsrF is the key enzyme for the divergence of the biosynthetic routes. The pathway begins with the synthesis of atrochrysone thioester by the polyketide synthase nsrB. The atrochrysone carboxyl ACP thioesterase nsrC then breaks the thioester bond and releases the atrochrysone carboxylic acid from AacuL. Atrochrysone carboxylic acid is decarboxylated by the decarboxylase nsrE, and oxidized by the anthrone oxygenase nsrD to yield emodin. Emodin is then reduced to emodin hydroquinone by the oxidoreductase nsrR. A-ring reduction by the short chain dehydrogenase nsrJ, dehydration by the scytalone dehydratase-like protein nsrI and probable spontaneous re-oxidation, results in overall deoxygenation to chrysophanol. The Baeyer-Villiger monooxygenase nsrF accepts chrysophanol as a substrate to insert one oxygen atom at two different positions to yield the precursors of both monomric units. NsrF is promiscuous/flexible in interacting with the 2 (non methylated and methylated) aromatic rings of chrysophanol, thus diverging the biosynthetic pathway at this point. After the hydrolysis of the lactones, methylesterification by the methyltransferase nsrG yields respectively moniliphenone and 2,2',6'-trihydroxy-4-methyl-6-methoxya-cyldiphenylmethanone. The next steps are the hydroxylation by the FAD-dependent monooxygenase nsrK, followed by isomerization by the monooxygenase nsrQ. The short chain dehydrogenase/reductase nsrO then catalyzes the C-5 ketoreduction to give the xanthone skeleton of blennolide C and 5-acetylblennolide A. The acetyltransferase nsrL has a strict substrate specificity and uses only blennolide A but not blennolide C to yield 5-acetylblennolide A as the single-acetylated product. In the final step of the biosynthesis, the heterodimerization of the 2 xanthones, blennolide C and 5-acetylblennolide A, is catalyzed by the cytochrome P450 monooxygenase nsrP. NsrP can utilize at least three different xanthones as its substrates to perform the dimerization reaction. This Aspergillus novofumigatus (strain IBT 16806) protein is Oxidoreductase nsrR.